The primary structure comprises 161 residues: Transcription elongation factor GreA (161 aa).

Residues 8-28 (LTQEGFKQLEKELENLIQVKR) are a coiled coil.

Belongs to the GreA/GreB family.

Functionally, necessary for efficient RNA polymerase transcription elongation past template-encoded arresting sites. The arresting sites in DNA have the property of trapping a certain fraction of elongating RNA polymerases that pass through, resulting in locked ternary complexes. Cleavage of the nascent transcript by cleavage factors such as GreA or GreB allows the resumption of elongation from the new 3'terminus. GreA releases sequences of 2 to 3 nucleotides. This is Transcription elongation factor GreA from Mycoplasma genitalium (strain ATCC 33530 / DSM 19775 / NCTC 10195 / G37) (Mycoplasmoides genitalium).